The sequence spans 506 residues: Glutamate--tRNA ligase (506 aa).

The short motif at 9-19 is the 'HIGH' region element; the sequence is PSPTGFQHIGG. Residues 251–255 carry the 'KMSKS' region motif; the sequence is KLSKR. Residue Lys-254 participates in ATP binding.

This sequence belongs to the class-I aminoacyl-tRNA synthetase family. Glutamate--tRNA ligase type 1 subfamily. As to quaternary structure, monomer.

It localises to the cytoplasm. The enzyme catalyses tRNA(Glu) + L-glutamate + ATP = L-glutamyl-tRNA(Glu) + AMP + diphosphate. Its function is as follows. Catalyzes the attachment of glutamate to tRNA(Glu) in a two-step reaction: glutamate is first activated by ATP to form Glu-AMP and then transferred to the acceptor end of tRNA(Glu). This chain is Glutamate--tRNA ligase, found in Treponema denticola (strain ATCC 35405 / DSM 14222 / CIP 103919 / JCM 8153 / KCTC 15104).